The primary structure comprises 293 residues: 4-diphosphocytidyl-2-C-methyl-D-erythritol kinase (293 aa).

Lys-16 is an active-site residue. 99–109 lines the ATP pocket; the sequence is PMGAGLGGGSS. The active site involves Asp-141.

This sequence belongs to the GHMP kinase family. IspE subfamily.

The enzyme catalyses 4-CDP-2-C-methyl-D-erythritol + ATP = 4-CDP-2-C-methyl-D-erythritol 2-phosphate + ADP + H(+). It participates in isoprenoid biosynthesis; isopentenyl diphosphate biosynthesis via DXP pathway; isopentenyl diphosphate from 1-deoxy-D-xylulose 5-phosphate: step 3/6. In terms of biological role, catalyzes the phosphorylation of the position 2 hydroxy group of 4-diphosphocytidyl-2C-methyl-D-erythritol. The polypeptide is 4-diphosphocytidyl-2-C-methyl-D-erythritol kinase (Paraburkholderia xenovorans (strain LB400)).